Consider the following 196-residue polypeptide: Neuropeptide prohormone-4 (196 aa).

The N-terminal stretch at 1–25 is a signal peptide; the sequence is MSSPLRMDVTFLLAAIAVTWVCGLK. Residues 50-90 form the LDL-receptor class A domain; it reads DCDIASPFKCEESPTCLRLFQVCNGRWDCEHGSDEDNALCA. 3 cysteine pairs are disulfide-bonded: Cys51–Cys65, Cys59–Cys78, and Cys72–Cys89.

In terms of tissue distribution, expressed by the venom duct.

The protein localises to the secreted. This Conus victoriae (Queen Victoria cone) protein is Neuropeptide prohormone-4.